A 725-amino-acid chain; its full sequence is Sodium/hydrogen exchanger 7 (725 aa).

Positions 1–20 (MEPGDAARPGSGRATGAPPP) are disordered. Topologically, residues 1–21 (MEPGDAARPGSGRATGAPPPR) are cytoplasmic. A helical membrane pass occupies residues 22–42 (LLLLPLLLGWGLRVAAAASAS). Residues 43 to 70 (SSGAAAEDSSAMEELATEKEAEESHRQD) are Lumenal-facing. Residues 71–91 (SVSLLTFILLLTLTILTIWLF) traverse the membrane as a helical segment. Residues 92-95 (KHRR) lie on the Cytoplasmic side of the membrane. The helical transmembrane segment at 96–116 (VRFLHETGLAMIYGLIVGVIL) threads the bilayer. Topologically, residues 117-175 (RYGTPATSGRDKSLSCTQEDRAFSTLLVNVSGKFFEYTLKGEISPGKINSVEQNDMLRK) are lumenal. N-linked (GlcNAc...) asparagine glycosylation is present at Asn-145. A helical membrane pass occupies residues 176–196 (VTFDPEVFFNILLPPIIFHAG). At 197 to 210 (YSLKKRHFFRNLGS) the chain is on the cytoplasmic side. A helical transmembrane segment spans residues 211-231 (ILAYAFLGTAVSCFIIGNLMY). At 232 to 251 (GVVKLMKIMGQLSDKFYYTD) the chain is on the lumenal side. A helical transmembrane segment spans residues 252–272 (CLFFGAIISATDPVTVLAIFN). Topologically, residues 273 to 277 (ELHAD) are cytoplasmic. A helical transmembrane segment spans residues 278 to 298 (VDLYALLFGESVLNDAVAIVL). Over 299–322 (SSSIVAYQPAGLNTHAFDAAAFFK) the chain is Lumenal. Residues 323–343 (SVGIFLGIFSGSFTMGAVTGV) traverse the membrane as a helical segment. At 344-349 (NANVTK) the chain is on the cytoplasmic side. Transmembrane regions (helical) follow at residues 350–370 (FTKL…MSWS) and 371–391 (TFLL…FCGI). Topologically, residues 392-414 (TQAHYTYNNLSVESRSRTKQLFE) are cytoplasmic. Residues 415–435 (VLHFLAENFIFSYMGLALFTF) traverse the membrane as a helical segment. At 436–442 (QKHVFSP) the chain is on the lumenal side. A helical transmembrane segment spans residues 443-463 (IFIIGAFVAIFLGRAAHIYPL). At 464 to 474 (SFFLNLGRRHK) the chain is on the cytoplasmic side. The chain crosses the membrane as a helical span at residues 475–497 (IGWNFQHMMMFSGLRGAMAFALA). Residues 498–513 (IRDTASYARQMMFTTT) are Lumenal-facing. The helical transmembrane segment at 514–534 (LLIVFFTVWIIGGGTTPMLSW) threads the bilayer. Required for trans-Golgi network localization regions lie at residues 533–559 (SWLN…YFRV) and 563–568 (PDQDPP). Residues 535–725 (LNIRVGVEEP…RLVFPLEDNA (191 aa)) lie on the Cytoplasmic side of the membrane. At Ser-545 the chain carries Phosphoserine. Disordered stretches follow at residues 567–590 (PPPN…GNRT) and 669–714 (TVTA…SSRG). Residues 675 to 684 (SSSSHTASTS) are compositionally biased toward low complexity. A compositionally biased stretch (basic and acidic residues) spans 687 to 704 (GSRRTKSSSEEVLERDLG).

The protein belongs to the monovalent cation:proton antiporter 1 (CPA1) transporter (TC 2.A.36) family. As to quaternary structure, interacts with SCAMP1, SCAMP2 and SCAMP5; may participate in its shuttling from trans-Golgi network to recycling endosomes. Post-translationally, N-glycosylated. Ubiquitously expressed.

The protein resides in the golgi apparatus. It is found in the trans-Golgi network membrane. It localises to the recycling endosome membrane. The protein localises to the cell membrane. It carries out the reaction Na(+)(in) + H(+)(out) = Na(+)(out) + H(+)(in). It catalyses the reaction K(+)(in) + H(+)(out) = K(+)(out) + H(+)(in). With respect to regulation, inhibited by benzamil and quinine but not by amiloride. Its function is as follows. Golgi Na(+), K(+)/(H+) antiporter. Mediates the electoneutral influx of Na(+) or K(+) in exchange for H(+). May contribute to the regulation of Golgi apparatus volume and pH. This chain is Sodium/hydrogen exchanger 7 (SLC9A7), found in Homo sapiens (Human).